The primary structure comprises 214 residues: Large ribosomal subunit protein bL25 (214 aa).

2 disordered regions span residues 1-23 (MSNE…SRRL) and 182-214 (DHDQ…ASEE). Over residues 200 to 214 (DDDDAAEGEEAASEE) the composition is skewed to acidic residues.

Belongs to the bacterial ribosomal protein bL25 family. CTC subfamily. As to quaternary structure, part of the 50S ribosomal subunit; part of the 5S rRNA/L5/L18/L25 subcomplex. Contacts the 5S rRNA. Binds to the 5S rRNA independently of L5 and L18.

This is one of the proteins that binds to the 5S RNA in the ribosome where it forms part of the central protuberance. This chain is Large ribosomal subunit protein bL25, found in Alcanivorax borkumensis (strain ATCC 700651 / DSM 11573 / NCIMB 13689 / SK2).